An 82-amino-acid polypeptide reads, in one-letter code: Penaeidin-3e (82 aa).

The N-terminal stretch at 1–19 (MRLVVCLVFLAPFALVCHG) is a signal peptide. At Gln-20 the chain carries Pyrrolidone carboxylic acid. Intrachain disulfides connect Cys-51–Cys-66, Cys-55–Cys-73, and Cys-67–Cys-74. Serine amide is present on Ser-81.

Belongs to the penaeidin family.

The protein localises to the cytoplasmic granule. In terms of biological role, antibacterial and antifungal activity. Presents chitin-binding activity. The protein is Penaeidin-3e of Penaeus vannamei (Whiteleg shrimp).